We begin with the raw amino-acid sequence, 317 residues long: Olfactory receptor-like protein OLF3 (317 aa).

The Extracellular segment spans residues M1–V25. An N-linked (GlcNAc...) asparagine glycan is attached at N5. A helical membrane pass occupies residues S26 to I49. Over R50–T57 the chain is Cytoplasmic. Residues P58–P79 traverse the membrane as a helical segment. The Extracellular portion of the chain corresponds to Q80 to Q100. The chain crosses the membrane as a helical span at residues L101–Y120. Over D121–G139 the chain is Cytoplasmic. A helical transmembrane segment spans residues L140–M158. Over Q159 to E196 the chain is Extracellular. A helical membrane pass occupies residues I197–I219. The Cytoplasmic segment spans residues Q220 to K236. A helical transmembrane segment spans residues A237–I260. Topologically, residues Q261–K272 are extracellular. Residues L273–V292 form a helical membrane-spanning segment. At R293–T317 the chain is on the cytoplasmic side.

Belongs to the G-protein coupled receptor 1 family.

The protein resides in the cell membrane. Its function is as follows. Putative odorant or sperm cell receptor. The chain is Olfactory receptor-like protein OLF3 from Canis lupus familiaris (Dog).